We begin with the raw amino-acid sequence, 185 residues long: Biofilm operon icaADBC HTH-type negative transcriptional regulator IcaR (185 aa).

One can recognise an HTH tetR-type domain in the interval 1–59 (MKDKIIDNAITLFSEKGYDGTTLDDISKSVNIKKASLYYHYDNKEEIYRKSVENCFNYF). Positions 22–41 (TLDDISKSVNIKKASLYYHY) form a DNA-binding region, H-T-H motif.

Homodimer.

Represses transcription of the icaADBC operon necessary for biofilm production. The polypeptide is Biofilm operon icaADBC HTH-type negative transcriptional regulator IcaR (icaR) (Staphylococcus epidermidis (strain ATCC 35984 / DSM 28319 / BCRC 17069 / CCUG 31568 / BM 3577 / RP62A)).